The chain runs to 779 residues: MDDRHEGDHHDIEVEGGALHGFERKISGILDDGSVGFRQPLLARNRKNTTSQIAIVGANTCPIESLDYEIFENDFFKQDWRSRKKIEILQYTFLKWALAFLIGLATGLVGFLNNLGVENIAGFKLLLIGNLMLKEKYFQAFFAFAGCNLILATAAASLCAFIAPAAAGSGIPEVKAYLNGIDAYSILAPSTLFVKIFGSIFGVAAGFVVGKEGPMVHTGACIANLLGQGGSKKYRLTWKWLRFFKNDRDRRDLITCGAAAGVAAAFRAPVGGVLFALEEAASWWRNALLWRTFFTTAVVAVVLRSLIEFCRSGRCGLFGKGGLIMFDVNSGPVLYSTPDLLAIVFLGVIGGVLGSLYNYLVDKVLRTYSIINEKGPRFKIMLVMAVSILSSCCAFGLPWLSQCTPCPIGIEEGKCPSVGRSSIYKSFQCPPNHYNDLSSLLLNTNDDAIRNLFTSRSENEFHISTLAIFFVAVYCLGIITYGIAIPSGLFIPVILAGASYGRLVGRLLGPVSQLDVGLFSLLGAASFLGGTMRMTVSLCVILLELTNNLLMLPLVMLVLLISKTVADCFNRGVYDQIVTMKGLPYMEDHAEPYMRNLVAKDVVSGALISFSRVEKVGVIWQALKMTRHNGFPVIDEPPFTEASELCGIALRSHLLVLLQGKKFSKQRTTFGSQILRSCKARDFGKAGLGKGLKIEDLDLSEEEMEMYVDLHPITNTSPYTVLETLSLAKAAILFRQLGLRHLCVVPKTPGRPPIVGILTRHDFMPEHVLGLYPHIDPLK.

Position 27 is a phosphoserine (serine 27). 12 consecutive transmembrane segments (helical) span residues 92-112, 142-162, 190-210, 215-235, 257-277, 287-307, 341-361, 380-400, 466-486, 488-508, 520-540, and 541-561; these read TFLKWALAFLIGLATGLVGFL, FAFAGCNLILATAAASLCAFI, STLFVKIFGSIFGVAAGFVVG, MVHTGACIANLLGQGGSKKYR, GAAAGVAAAFRAPVGGVLFAL, ALLWRTFFTTAVVAVVLRSLI, LAIVFLGVIGGVLGSLYNYLV, IMLVMAVSILSSCCAFGLPWL, LAIFFVAVYCLGIITYGIAIP, GLFIPVILAGASYGRLVGRLL, SLLGAASFLGGTMRMTVSLCV, and ILLELTNNLLMLPLVMLVLLI. Residues 601 to 659 enclose the CBS 1 domain; that stretch reads DVVSGALISFSRVEKVGVIWQALKMTRHNGFPVIDEPPFTEASELCGIALRSHLLVLLQ. Residue serine 672 is modified to Phosphoserine. Positions 713 to 777 constitute a CBS 2 domain; it reads ITNTSPYTVL…VLGLYPHIDP (65 aa). The helical transmembrane segment at 741 to 761 threads the bilayer; the sequence is HLCVVPKTPGRPPIVGILTRH.

Belongs to the chloride channel (TC 2.A.49) family. Homodimer. Interacts with PP2A5. As to expression, broadly expressed in the plant.

It is found in the membrane. Voltage-gated chloride channel. The sequence is that of Chloride channel protein CLC-c (CLC-C) from Arabidopsis thaliana (Mouse-ear cress).